We begin with the raw amino-acid sequence, 124 residues long: Small ribosomal subunit protein uS12cz/uS12cy (124 aa).

It belongs to the universal ribosomal protein uS12 family. As to quaternary structure, part of the 30S ribosomal subunit.

The protein localises to the plastid. Its subcellular location is the chloroplast. Functionally, with S4 and S5 plays an important role in translational accuracy. Located at the interface of the 30S and 50S subunits. In Zea mays (Maize), this protein is Small ribosomal subunit protein uS12cz/uS12cy (rps12-A).